An 85-amino-acid chain; its full sequence is Large ribosomal subunit protein bL27 (85 aa).

Residues Met-1 to Gly-22 form a disordered region.

This sequence belongs to the bacterial ribosomal protein bL27 family.

The protein is Large ribosomal subunit protein bL27 of Aliivibrio fischeri (strain ATCC 700601 / ES114) (Vibrio fischeri).